A 110-amino-acid polypeptide reads, in one-letter code: uncharacterized protein (110 aa).

This is an uncharacterized protein from Microplitis demolitor bracovirus (isolate Webb) (MdBV).